The sequence spans 478 residues: Geranial dehydrogenase (478 aa).

230–235 contributes to the NAD(+) binding site; sequence GSTSAG. The active-site Proton acceptor is glutamate 252. Catalysis depends on cysteine 286, which acts as the Nucleophile.

This sequence belongs to the aldehyde dehydrogenase family.

The enzyme catalyses (2E)-geranial + NAD(+) + H2O = geranate + NADH + 2 H(+). It catalyses the reaction perillyl aldehyde + NAD(+) + H2O = perillate + NADH + 2 H(+). The protein operates within terpene metabolism; monoterpene degradation. Involved in the degradation of the monoterpenes beta-myrcene and limonene. During anaerobic degradation of beta-myrcene, catalyzes the NAD(+)-dependent oxidation of geranial to geranic acid. Seems to be specific for the trans-isomer geranial, since it does not act on the cis-isomer neral. During degradation of limonene, catalyzes the NAD(+)-dependent conversion of perillyl aldehyde to perrilic acid. This Castellaniella defragrans (strain DSM 12143 / CCUG 39792 / 65Phen) (Alcaligenes defragrans) protein is Geranial dehydrogenase.